A 701-amino-acid chain; its full sequence is Probable cytosolic oligopeptidase A (701 aa).

Ala2 is subject to N-acetylalanine. Residues 148-194 (IALEDDKREEFNKIEQELEKLSHKFSENVLDATKKFEKLITDKKEIE) adopt a coiled-coil conformation. Residue His483 participates in Zn(2+) binding. Glu484 is an active-site residue. Positions 487 and 513 each coordinate Zn(2+). 615–621 (HIFAGGY) contacts substrate.

It belongs to the peptidase M3 family. Requires Zn(2+) as cofactor.

The protein resides in the cytoplasm. Its subcellular location is the cytosol. The catalysed reaction is Hydrolysis of oligopeptides, with broad specificity. Gly or Ala commonly occur as P1 or P1' residues, but more distant residues are also important, as is shown by the fact that Z-Gly-Pro-Gly-|-Gly-Pro-Ala is cleaved, but not Z-(Gly)(5).. Its activity is regulated as follows. Inhibited by salicylic acid. Oligopeptidase that may be involved in the degradation of proteasome-generated peptides. Binds salicylic acid. In Arabidopsis thaliana (Mouse-ear cress), this protein is Probable cytosolic oligopeptidase A.